The following is a 266-amino-acid chain: MPEVTLTTLNGLKAKGEKITMLTCYDATFAKAASEAGVEVLLVGDSLGMVLQGHDSTLPVSNDDMAYHTASVKRGNNGALILTDLPFMAHATPELAFTNAAQLMRAGAHMVKIEGAAWLAETIRLLAERGVPVCAHMGLTPQTVNVLGGYKVQGRQEAQARQMRADAIALEQAGAAMLLLECVPSELAAEITQAVGIPVIGIGAGSATDGQVLVLHDMLGLSLSGRVPKFVKNFMAGQPDIQSALAAYVEAVKTVSFPASEHGFSA.

Mg(2+) is bound by residues aspartate 45 and aspartate 84. 3-methyl-2-oxobutanoate is bound by residues 45–46 (DS), aspartate 84, and lysine 112. Glutamate 114 is a binding site for Mg(2+). Glutamate 181 acts as the Proton acceptor in catalysis.

The protein belongs to the PanB family. In terms of assembly, homodecamer; pentamer of dimers. Requires Mg(2+) as cofactor.

The protein resides in the cytoplasm. The catalysed reaction is 3-methyl-2-oxobutanoate + (6R)-5,10-methylene-5,6,7,8-tetrahydrofolate + H2O = 2-dehydropantoate + (6S)-5,6,7,8-tetrahydrofolate. Its pathway is cofactor biosynthesis; (R)-pantothenate biosynthesis; (R)-pantoate from 3-methyl-2-oxobutanoate: step 1/2. Catalyzes the reversible reaction in which hydroxymethyl group from 5,10-methylenetetrahydrofolate is transferred onto alpha-ketoisovalerate to form ketopantoate. This Pseudomonas entomophila (strain L48) protein is 3-methyl-2-oxobutanoate hydroxymethyltransferase 2.